We begin with the raw amino-acid sequence, 462 residues long: MIFDKVLSTINKHNLIQKGDKIVLGLSGGPDSVCLLHVLNRLKKDFNIEIYAAHLNHQIRGIEAQKDALYVSKLCEDMGIIFFVKSINVPKYCENEGLSLEEGARKLRYEMFYEIKDKIKANKIAIGHNLNDQAETVMMRIMRGTGLKGLKGIDYIRDNCIIRPILDVERNEIEEYCEAYNLNPRIDKTNLENIYTRNKIRLDLLPYMKDNFNSNVIESIVRMSNSLKSDNDYIEKEAEAKFREVSNIKEKGFVEINLDDFVCLHDAIKVRVLRNSIKHILGDTNFVDQRHIEDIMSLEDNSKVNKMLTLPRNIFVYRKKDSIILTNEEIVNEEIEFYYNVPSNGFIKIKELKQIIETQVMSIDRYKSMKLDNSSKGFDFNKVKGGIVIRSRRQGDKIKLAMGSKKVKDLFIDLKIPREERCKIPIITDSEGIICVGDYKISENYKIDENTKEVLKINFNKL.

Residue 27-32 (SGGPDS) participates in ATP binding.

Belongs to the tRNA(Ile)-lysidine synthase family.

The protein resides in the cytoplasm. The enzyme catalyses cytidine(34) in tRNA(Ile2) + L-lysine + ATP = lysidine(34) in tRNA(Ile2) + AMP + diphosphate + H(+). Its function is as follows. Ligates lysine onto the cytidine present at position 34 of the AUA codon-specific tRNA(Ile) that contains the anticodon CAU, in an ATP-dependent manner. Cytidine is converted to lysidine, thus changing the amino acid specificity of the tRNA from methionine to isoleucine. The polypeptide is tRNA(Ile)-lysidine synthase (Clostridioides difficile (strain 630) (Peptoclostridium difficile)).